Here is a 189-residue protein sequence, read N- to C-terminus: Peptidyl-tRNA hydrolase (189 aa).

Tyrosine 15 serves as a coordination point for tRNA. The active-site Proton acceptor is the histidine 20. Tyrosine 64, asparagine 66, and asparagine 112 together coordinate tRNA.

It belongs to the PTH family. As to quaternary structure, monomer.

Its subcellular location is the cytoplasm. The catalysed reaction is an N-acyl-L-alpha-aminoacyl-tRNA + H2O = an N-acyl-L-amino acid + a tRNA + H(+). Functionally, hydrolyzes ribosome-free peptidyl-tRNAs (with 1 or more amino acids incorporated), which drop off the ribosome during protein synthesis, or as a result of ribosome stalling. Its function is as follows. Catalyzes the release of premature peptidyl moieties from peptidyl-tRNA molecules trapped in stalled 50S ribosomal subunits, and thus maintains levels of free tRNAs and 50S ribosomes. This Sulfurihydrogenibium sp. (strain YO3AOP1) protein is Peptidyl-tRNA hydrolase.